The chain runs to 261 residues: Carbonic anhydrase 1 (261 aa).

A2 is subject to N-acetylalanine. Positions 4–261 (PDWGYDDKNG…LKGRTVRASF (258 aa)) constitute an Alpha-carbonic anhydrase domain. Residue H65 is the Proton donor/acceptor of the active site. Zn(2+) is bound by residues H95, H97, and H120. Residues T200 and 200-201 (TH) contribute to the substrate site. The interval 238–261 (NPVPIQRNNRPTQPLKGRTVRASF) is disordered.

The protein belongs to the alpha-carbonic anhydrase family. It depends on Zn(2+) as a cofactor.

The protein localises to the cytoplasm. The enzyme catalyses hydrogencarbonate + H(+) = CO2 + H2O. It carries out the reaction urea = cyanamide + H2O. With respect to regulation, inhibited by acetazolamide. Catalyzes the reversible hydration of carbon dioxide. Can hydrate cyanamide to urea. The chain is Carbonic anhydrase 1 (CA1) from Macaca mulatta (Rhesus macaque).